Reading from the N-terminus, the 333-residue chain is Acyl-CoA wax alcohol acyltransferase 2 (333 aa).

The next 3 membrane-spanning stretches (helical) occupy residues 15–35 (VFAVFQWSFSALLITTTVIAV), 38–58 (YLVVFTPYWPVTVLILTWLAF), and 130–150 (IFPGITPYILTLGAFFWMPFL).

This sequence belongs to the diacylglycerol acyltransferase family. As to quaternary structure, monomer. In terms of tissue distribution, highly expressed in skin, where it is primarily restricted to undifferentiated peripheral sebocytes. Also expressed at lower level in other tissues except pancreas.

It is found in the endoplasmic reticulum membrane. It catalyses the reaction a long chain fatty alcohol + a fatty acyl-CoA = a wax ester + CoA. It carries out the reaction all-trans-retinol + an acyl-CoA = an all-trans-retinyl ester + CoA. The enzyme catalyses an acyl-CoA + a 1,2-diacyl-sn-glycerol = a triacyl-sn-glycerol + CoA. The catalysed reaction is 11-cis-retinol + a fatty acyl-CoA = 11-cis-retinyl ester + CoA. It catalyses the reaction 9-cis-retinol + a fatty acyl-CoA = 9-cis-retinyl ester + CoA. It carries out the reaction 13-cis-retinol + a fatty acyl-CoA = 13-cis-retinyl ester + CoA. The enzyme catalyses a 1-acylglycerol + an acyl-CoA = a 1,2-diacylglycerol + CoA. The catalysed reaction is 1-O-alkylglycerol + an acyl-CoA = 1-O-alkyl-3-acylglycerol + CoA. It catalyses the reaction a 2-acylglycerol + an acyl-CoA = a 1,2-diacyl-sn-glycerol + CoA. It carries out the reaction 2-(9Z-octadecenoyl)-glycerol + hexadecanoyl-CoA = 1-hexadecanoyl-2-(9Z-octadecenoyl)-sn-glycerol + CoA. The enzyme catalyses 1,2-di-(9Z-octadecenoyl)-sn-glycerol + hexadecanoyl-CoA = 1,2-di-(9Z)-octadecenoyl-3-hexadecanoyl-sn-glycerol + CoA. The catalysed reaction is hexadecan-1-ol + hexadecanoyl-CoA = hexadecanyl hexadecanoate + CoA. It catalyses the reaction hexadecane-1,2-diol + hexadecanoyl-CoA = 2-hydroxyhexadecyl hexadecanoate + CoA. It carries out the reaction 9-cis-retinol + hexadecanoyl-CoA = 9-cis-retinyl hexadecanoate + CoA. The enzyme catalyses all-trans-retinol + hexadecanoyl-CoA = all-trans-retinyl hexadecanoate + CoA. The catalysed reaction is 1,2-di-(9Z-octadecenoyl)-sn-glycerol + (9Z)-octadecenoyl-CoA = 1,2,3-tri-(9Z-octadecenoyl)-glycerol + CoA. It catalyses the reaction hexadecan-1-ol + (9Z)-octadecenoyl-CoA = hexadecanyl (9Z)-octadecenoate + CoA. It carries out the reaction (9Z)-hexadecen-1-ol + (9Z)-octadecenoyl-CoA = 1-O-(9Z)-hexadecenyl (9Z)-octadecenoate + CoA. The enzyme catalyses octadecan-1-ol + (9Z)-octadecenoyl-CoA = 1-O-octadecyl (9Z)-octadecenoate + CoA. The catalysed reaction is (9Z)-octadecen-1-ol + (9Z)-octadecenoyl-CoA = 1-O-(9Z)-octadecenyl (9Z)-octadecenoate + CoA. It catalyses the reaction hexadecan-1-ol + (9Z)-hexadecenoyl-CoA = 1-O-hexadecyl (9Z)-hexadecenoate + CoA. It carries out the reaction hexadecan-1-ol + octadecanoyl-CoA = hexadecanyl octadecanoate + CoA. The enzyme catalyses 11-cis-retinol + hexadecanoyl-CoA = 11-cis-retinyl hexadecanoate + CoA. The catalysed reaction is 1-O-(9Z-octadecenyl)-glycerol + (9Z)-octadecenoyl-CoA = 1-O-(9Z-octadecyl)-3-(9Z-octadecenoyl)-glycerol + CoA. It catalyses the reaction 1-(9Z-octadecenoyl)-glycerol + (9Z)-octadecenoyl-CoA = 1,2-di-(9Z-octadecenoyl)-glycerol + CoA. It carries out the reaction 11-cis-retinol + tetradecanoyl-CoA = 11-cis-retinyl tetradecanoate + CoA. The enzyme catalyses 9-cis-retinol + tetradecanoyl-CoA = 9-cis-retinyl tetradecanoate + CoA. The catalysed reaction is 13-cis-retinol + tetradecanoyl-CoA = 13-cis-retinyl tetradecanoate + CoA. It catalyses the reaction all-trans-retinol + tetradecanoyl-CoA = all-trans-retinyl tetradecanoate + CoA. It carries out the reaction tetradecan-1-ol + tetradecanoyl-CoA = tetradecanyl tetradecanoate + CoA. With respect to regulation, 11-cis retinoids act as allosteric modulators of acyl-CoA retinol O-fatty-acyltransferase (ARAT) activity by suppressing esterification of 9-cis, 13-cis, or all-trans retinols concurrently increasing the enzyme specificity toward 11-cis isomer. Acyltransferase that catalyzes the formation of ester bonds between fatty alcohols and fatty acyl-CoAs to form wax monoesters. Shows a preference for medium chain acyl-CoAs from C12 to C16 in length and fatty alcohols shorter than C20, as the acyl donors and acceptors, respectively. Also possesses acyl-CoA retinol acyltransferase (ARAT) activity that preferentially esterifies 11-cis-retinol, a chromophore precursor of bleached opsin pigments in cone cells. Shows higher catalytic efficiency toward 11-cis-retinol versus 9-cis-retinol, 13-cis-retinol, and all-trans-retinol substrates. The polypeptide is Acyl-CoA wax alcohol acyltransferase 2 (AWAT2) (Homo sapiens (Human)).